We begin with the raw amino-acid sequence, 1039 residues long: Antigen 43 (1039 aa).

The N-terminal stretch at 1–52 (MKRHLNTCYRLVWNHMTGAFVVASELARARGKRGGVAVALSLAAVTSLPVLA) is a signal peptide. An Autotransporter domain is found at 737–1039 (VNGENNSVRL…NGQATLNVTF (303 aa)).

In terms of assembly, interaction with TamA of the translocation and assembly module (TAM) initiates insertion in the outer membrane.

The protein resides in the periplasm. The protein localises to the secreted. It is found in the cell surface. Its subcellular location is the cell outer membrane. In terms of biological role, controls colony form variation and autoaggregation. May function as an adhesin. This chain is Antigen 43 (flu), found in Escherichia coli (strain K12).